The following is a 734-amino-acid chain: Photosystem I P700 chlorophyll a apoprotein A2 (734 aa).

Helical transmembrane passes span Ile46–Ala69, Leu135–Gln158, Leu175–Ile199, Met273–Tyr291, Leu330–Tyr353, Ala369–Leu395, Ala417–His439, and Phe517–Val535. Cys559 and Cys568 together coordinate [4Fe-4S] cluster. Helical transmembrane passes span Ala575–Trp596 and Leu643–Ile665. Positions 654, 662, and 670 each coordinate chlorophyll a. Residue Trp671 coordinates phylloquinone. Residues Leu707–Ala727 traverse the membrane as a helical segment.

The protein belongs to the PsaA/PsaB family. The PsaA/B heterodimer binds the P700 chlorophyll special pair and subsequent electron acceptors. PSI consists of a core antenna complex that captures photons, and an electron transfer chain that converts photonic excitation into a charge separation. The eukaryotic PSI reaction center is composed of at least 11 subunits. Requires P700 is a chlorophyll a/chlorophyll a' dimer, A0 is one or more chlorophyll a, A1 is one or both phylloquinones and FX is a shared 4Fe-4S iron-sulfur center. as cofactor.

The protein localises to the plastid. It is found in the chloroplast thylakoid membrane. It carries out the reaction reduced [plastocyanin] + hnu + oxidized [2Fe-2S]-[ferredoxin] = oxidized [plastocyanin] + reduced [2Fe-2S]-[ferredoxin]. PsaA and PsaB bind P700, the primary electron donor of photosystem I (PSI), as well as the electron acceptors A0, A1 and FX. PSI is a plastocyanin-ferredoxin oxidoreductase, converting photonic excitation into a charge separation, which transfers an electron from the donor P700 chlorophyll pair to the spectroscopically characterized acceptors A0, A1, FX, FA and FB in turn. Oxidized P700 is reduced on the lumenal side of the thylakoid membrane by plastocyanin. This chain is Photosystem I P700 chlorophyll a apoprotein A2, found in Adiantum capillus-veneris (Maidenhair fern).